The primary structure comprises 623 residues: Myosin light chain kinase 2, skeletal/cardiac muscle (623 aa).

2 disordered regions span residues 1 to 179 (MATE…PSCP) and 204 to 251 (GVPV…QGDT). Alanine 2 carries the post-translational modification N-acetylalanine. Positions 20–31 (APKAAAGEGPPA) are enriched in low complexity. Basic and acidic residues-rich tracts occupy residues 32-43 (AEKDPGPPDPQK) and 49-89 (DPEK…EKGD). The span at 90–102 (GASAQPSASSQGP) shows a compositional bias: low complexity. The span at 150–159 (GEAKEQKKVA) shows a compositional bias: basic and acidic residues. A phosphoserine mark is found at serine 169, serine 175, and serine 177. The span at 204–214 (GVPVTPGPTET) shows a compositional bias: low complexity. Basic and acidic residues predominate over residues 215–224 (EPAKVAEGEK). A Protein kinase domain is found at 312-567 (LNSKEALGGG…AAQCLAHPWL (256 aa)). ATP contacts are provided by residues 318-326 (LGGGKFGAV) and lysine 341. Catalysis depends on aspartate 433, which acts as the Proton acceptor. Residue threonine 472 is modified to Phosphothreonine. The tract at residues 601 to 613 (IAVSAANRFKKIS) is calmodulin-binding.

This sequence belongs to the protein kinase superfamily. CAMK Ser/Thr protein kinase family. In terms of assembly, may interact with centrin.

It localises to the cytoplasm. It carries out the reaction L-seryl-[myosin light chain] + ATP = O-phospho-L-seryl-[myosin light chain] + ADP + H(+). It catalyses the reaction L-threonyl-[myosin light chain] + ATP = O-phospho-L-threonyl-[myosin light chain] + ADP + H(+). Its function is as follows. Implicated in the level of global muscle contraction and cardiac function. Phosphorylates a specific serine in the N-terminus of a myosin light chain. The sequence is that of Myosin light chain kinase 2, skeletal/cardiac muscle (MYLK2) from Bos taurus (Bovine).